A 150-amino-acid polypeptide reads, in one-letter code: Large ribosomal subunit protein bL9 (150 aa).

This sequence belongs to the bacterial ribosomal protein bL9 family.

Its function is as follows. Binds to the 23S rRNA. This is Large ribosomal subunit protein bL9 from Shewanella piezotolerans (strain WP3 / JCM 13877).